The chain runs to 362 residues: Holliday junction branch migration complex subunit RuvB (362 aa).

Positions 1–183 (MADSSLVGGG…FGFTGHLEFY (183 aa)) are large ATPase domain (RuvB-L). Residues Leu22, Arg23, Gly64, Lys67, Thr68, Thr69, 130-132 (EDF), Arg173, Tyr183, and Arg220 contribute to the ATP site. Thr68 is a Mg(2+) binding site. The segment at 184-254 (SVEELELVLR…TASAALDMYE (71 aa)) is small ATPAse domain (RuvB-S). The interval 257–362 (KRGLDRLDRS…PVAEWLPNGQ (106 aa)) is head domain (RuvB-H). The DNA site is built by Arg312 and Arg317.

It belongs to the RuvB family. As to quaternary structure, homohexamer. Forms an RuvA(8)-RuvB(12)-Holliday junction (HJ) complex. HJ DNA is sandwiched between 2 RuvA tetramers; dsDNA enters through RuvA and exits via RuvB. An RuvB hexamer assembles on each DNA strand where it exits the tetramer. Each RuvB hexamer is contacted by two RuvA subunits (via domain III) on 2 adjacent RuvB subunits; this complex drives branch migration. In the full resolvosome a probable DNA-RuvA(4)-RuvB(12)-RuvC(2) complex forms which resolves the HJ.

The protein resides in the cytoplasm. It carries out the reaction ATP + H2O = ADP + phosphate + H(+). In terms of biological role, the RuvA-RuvB-RuvC complex processes Holliday junction (HJ) DNA during genetic recombination and DNA repair, while the RuvA-RuvB complex plays an important role in the rescue of blocked DNA replication forks via replication fork reversal (RFR). RuvA specifically binds to HJ cruciform DNA, conferring on it an open structure. The RuvB hexamer acts as an ATP-dependent pump, pulling dsDNA into and through the RuvAB complex. RuvB forms 2 homohexamers on either side of HJ DNA bound by 1 or 2 RuvA tetramers; 4 subunits per hexamer contact DNA at a time. Coordinated motions by a converter formed by DNA-disengaged RuvB subunits stimulates ATP hydrolysis and nucleotide exchange. Immobilization of the converter enables RuvB to convert the ATP-contained energy into a lever motion, pulling 2 nucleotides of DNA out of the RuvA tetramer per ATP hydrolyzed, thus driving DNA branch migration. The RuvB motors rotate together with the DNA substrate, which together with the progressing nucleotide cycle form the mechanistic basis for DNA recombination by continuous HJ branch migration. Branch migration allows RuvC to scan DNA until it finds its consensus sequence, where it cleaves and resolves cruciform DNA. This Arthrobacter sp. (strain FB24) protein is Holliday junction branch migration complex subunit RuvB.